A 412-amino-acid chain; its full sequence is ATP phosphoribosyltransferase regulatory subunit (412 aa).

It belongs to the class-II aminoacyl-tRNA synthetase family. HisZ subfamily. As to quaternary structure, heteromultimer composed of HisG and HisZ subunits.

The protein localises to the cytoplasm. It functions in the pathway amino-acid biosynthesis; L-histidine biosynthesis; L-histidine from 5-phospho-alpha-D-ribose 1-diphosphate: step 1/9. Functionally, required for the first step of histidine biosynthesis. May allow the feedback regulation of ATP phosphoribosyltransferase activity by histidine. This chain is ATP phosphoribosyltransferase regulatory subunit, found in Dehalococcoides mccartyi (strain ATCC BAA-2100 / JCM 16839 / KCTC 5957 / BAV1).